We begin with the raw amino-acid sequence, 120 residues long: Small ribosomal subunit protein uS13 (120 aa).

Positions 92-120 are disordered; sequence HRKGLPVRGQTTKNNARTRKGKKKTVGSK. Positions 107 to 120 are enriched in basic residues; sequence ARTRKGKKKTVGSK.

It belongs to the universal ribosomal protein uS13 family. Part of the 30S ribosomal subunit. Forms a loose heterodimer with protein S19. Forms two bridges to the 50S subunit in the 70S ribosome.

Functionally, located at the top of the head of the 30S subunit, it contacts several helices of the 16S rRNA. In the 70S ribosome it contacts the 23S rRNA (bridge B1a) and protein L5 of the 50S subunit (bridge B1b), connecting the 2 subunits; these bridges are implicated in subunit movement. Contacts the tRNAs in the A and P-sites. The chain is Small ribosomal subunit protein uS13 from Helicobacter hepaticus (strain ATCC 51449 / 3B1).